Here is a 199-residue protein sequence, read N- to C-terminus: Adult-specific cuticular protein ACP-22 (199 aa).

A signal peptide spans 1 to 19 (MRLFIILSVASFGAIGVLS). Residues 63 to 103 (GGGGGGGGEGEEGREHELRGGGLELGGGGGGGGGGGGGGGE) are disordered. Positions 82-102 (GGGLELGGGGGGGGGGGGGGG) are enriched in gly residues. Residues 133-199 (HPEYHSDYHV…IARVSYRKHH (67 aa)) form the Chitin-binding type R&amp;R domain.

In terms of tissue distribution, epidermal regions synthesizing hard cuticle.

Functionally, cuticular proteins play a significant role in determining the physical properties of cuticles. This is Adult-specific cuticular protein ACP-22 (ACP22) from Tenebrio molitor (Yellow mealworm beetle).